The chain runs to 379 residues: Muconate cycloisomerase 1-1 (379 aa).

The active site involves lysine 169. 3 residues coordinate Mn(2+): aspartate 198, glutamate 224, and aspartate 247.

It belongs to the mandelate racemase/muconate lactonizing enzyme family. Homooctamer. Mn(2+) is required as a cofactor.

The enzyme catalyses (S)-muconolactone = cis,cis-muconate + H(+). The protein operates within aromatic compound metabolism; beta-ketoadipate pathway; 5-oxo-4,5-dihydro-2-furylacetate from catechol: step 2/3. Its function is as follows. Catalyzes a syn cycloisomerization. The polypeptide is Muconate cycloisomerase 1-1 (catB1) (Acinetobacter lwoffii).